Here is a 702-residue protein sequence, read N- to C-terminus: Polyphosphate kinase (702 aa).

An ATP-binding site is contributed by Asn55. 2 residues coordinate Mg(2+): Arg389 and Arg419. His449 functions as the Phosphohistidine intermediate in the catalytic mechanism. ATP-binding residues include Tyr482, Arg578, and His606.

It belongs to the polyphosphate kinase 1 (PPK1) family. It depends on Mg(2+) as a cofactor. In terms of processing, an intermediate of this reaction is the autophosphorylated ppk in which a phosphate is covalently linked to a histidine residue through a N-P bond.

It catalyses the reaction [phosphate](n) + ATP = [phosphate](n+1) + ADP. Its function is as follows. Catalyzes the reversible transfer of the terminal phosphate of ATP to form a long-chain polyphosphate (polyP). The polypeptide is Polyphosphate kinase (Bacillus anthracis).